The following is a 221-amino-acid chain: MTADTQIPRATAQRLPIYYYYLSSLHEAGIKRINSTEISEAIKFDAATVRRDFSYFGALGKRGFGYDVSALLDFFSKVLSQDKLNKVAVVGTGNLGQALMKYNFVHSSNIQIVMGFDVDPKKKELKIDNEKGETIPVYSIGDLKSELNKENVTIAILTVPGKSAQEVTDQLVDAGIKGILNFSPIRITVPNSVRVQNVDLTTGMQTLIYFVDNFENIKSAK.

A DNA-binding region (H-T-H motif) is located at residues 17-56 (IYYYYLSSLHEAGIKRINSTEISEAIKFDAATVRRDFSYF). 91-96 (GTGNLG) lines the NAD(+) pocket.

Belongs to the transcriptional regulatory Rex family. Homodimer.

The protein localises to the cytoplasm. Functionally, modulates transcription in response to changes in cellular NADH/NAD(+) redox state. The protein is Redox-sensing transcriptional repressor Rex of Oenococcus oeni (strain ATCC BAA-331 / PSU-1).